Consider the following 156-residue polypeptide: Small ribosomal subunit protein uS7 (156 aa).

The protein belongs to the universal ribosomal protein uS7 family. As to quaternary structure, part of the 30S ribosomal subunit. Contacts proteins S9 and S11.

Functionally, one of the primary rRNA binding proteins, it binds directly to 16S rRNA where it nucleates assembly of the head domain of the 30S subunit. Is located at the subunit interface close to the decoding center, probably blocks exit of the E-site tRNA. The protein is Small ribosomal subunit protein uS7 of Desulfatibacillum aliphaticivorans.